We begin with the raw amino-acid sequence, 454 residues long: tRNA-2-methylthio-N(6)-dimethylallyladenosine synthase (454 aa).

In terms of domain architecture, MTTase N-terminal spans 6-122 (RHYHITTFGC…LKDLLESVFD (117 aa)). 6 residues coordinate [4Fe-4S] cluster: C15, C51, C85, C157, C161, and C164. Positions 143–381 (RDSKVTAWVN…HLGNLKVAER (239 aa)) constitute a Radical SAM core domain. The region spanning 383–447 (QRYFGRIEEV…PFSLTGQPVE (65 aa)) is the TRAM domain.

Belongs to the methylthiotransferase family. MiaB subfamily. In terms of assembly, monomer. It depends on [4Fe-4S] cluster as a cofactor.

The protein localises to the cytoplasm. The catalysed reaction is N(6)-dimethylallyladenosine(37) in tRNA + (sulfur carrier)-SH + AH2 + 2 S-adenosyl-L-methionine = 2-methylsulfanyl-N(6)-dimethylallyladenosine(37) in tRNA + (sulfur carrier)-H + 5'-deoxyadenosine + L-methionine + A + S-adenosyl-L-homocysteine + 2 H(+). Its function is as follows. Catalyzes the methylthiolation of N6-(dimethylallyl)adenosine (i(6)A), leading to the formation of 2-methylthio-N6-(dimethylallyl)adenosine (ms(2)i(6)A) at position 37 in tRNAs that read codons beginning with uridine. This Nostoc punctiforme (strain ATCC 29133 / PCC 73102) protein is tRNA-2-methylthio-N(6)-dimethylallyladenosine synthase.